We begin with the raw amino-acid sequence, 412 residues long: Multifunctional CCA protein (412 aa).

ATP is bound by residues G8 and R11. Residues G8 and R11 each coordinate CTP. Mg(2+) contacts are provided by E21 and D23. ATP contacts are provided by R92, R138, and R141. Residues R92, R138, and R141 each coordinate CTP. Residues 227-328 (TGIHTMMTVA…IKLFYAIDVW (102 aa)) enclose the HD domain.

It belongs to the tRNA nucleotidyltransferase/poly(A) polymerase family. Bacterial CCA-adding enzyme type 1 subfamily. In terms of assembly, monomer. Can also form homodimers and oligomers. Mg(2+) serves as cofactor. Requires Ni(2+) as cofactor.

The catalysed reaction is a tRNA precursor + 2 CTP + ATP = a tRNA with a 3' CCA end + 3 diphosphate. It carries out the reaction a tRNA with a 3' CCA end + 2 CTP + ATP = a tRNA with a 3' CCACCA end + 3 diphosphate. Functionally, catalyzes the addition and repair of the essential 3'-terminal CCA sequence in tRNAs without using a nucleic acid template. Adds these three nucleotides in the order of C, C, and A to the tRNA nucleotide-73, using CTP and ATP as substrates and producing inorganic pyrophosphate. tRNA 3'-terminal CCA addition is required both for tRNA processing and repair. Also involved in tRNA surveillance by mediating tandem CCA addition to generate a CCACCA at the 3' terminus of unstable tRNAs. While stable tRNAs receive only 3'-terminal CCA, unstable tRNAs are marked with CCACCA and rapidly degraded. This Baumannia cicadellinicola subsp. Homalodisca coagulata protein is Multifunctional CCA protein.